The sequence spans 429 residues: Glutamate-1-semialdehyde 2,1-aminomutase (429 aa).

N6-(pyridoxal phosphate)lysine is present on Lys265.

The protein belongs to the class-III pyridoxal-phosphate-dependent aminotransferase family. HemL subfamily. In terms of assembly, homodimer. Pyridoxal 5'-phosphate serves as cofactor.

The protein resides in the cytoplasm. It carries out the reaction (S)-4-amino-5-oxopentanoate = 5-aminolevulinate. It functions in the pathway porphyrin-containing compound metabolism; protoporphyrin-IX biosynthesis; 5-aminolevulinate from L-glutamyl-tRNA(Glu): step 2/2. The protein is Glutamate-1-semialdehyde 2,1-aminomutase of Acidobacterium capsulatum (strain ATCC 51196 / DSM 11244 / BCRC 80197 / JCM 7670 / NBRC 15755 / NCIMB 13165 / 161).